Reading from the N-terminus, the 329-residue chain is Ankyrin repeat and SOCS box protein 5 (329 aa).

ANK repeat units lie at residues 69-98, 102-131, 135-164, 167-196, 200-229, and 232-261; these read ADRSPLHEAASQGRLLALRTLLSQGYNVNA, DHVTPLHEACLGDHVACARTLLEAGANVNA, DGVTPLFNACSQGSPSCAELLLEYGAKAQL, CLPSPTHEAASKGHHECLDILISWGIDVDQ, HLGTPLYVACMSQQFHCIWKLLYAGADVQK, and YWDTPLHAAAQQSSTEIVNLLLEFGADINA. One can recognise an SOCS box domain in the interval 278–329; that stretch reads MVERILLQHEATPSSLYQLCRLCIRSYIGKPRLHLIPQLQLPTLLKNFLQYR.

This sequence belongs to the ankyrin SOCS box (ASB) family.

It functions in the pathway protein modification; protein ubiquitination. Its function is as follows. May be a substrate-recognition component of a SCF-like ECS (Elongin-Cullin-SOCS-box protein) E3 ubiquitin-protein ligase complex which mediates the ubiquitination and subsequent proteasomal degradation of target proteins. May play a role in the initiation of arteriogenesis. This chain is Ankyrin repeat and SOCS box protein 5 (ASB5), found in Homo sapiens (Human).